The primary structure comprises 874 residues: Alanine--tRNA ligase (874 aa).

Zn(2+)-binding residues include His562, His566, Cys665, and His669.

Belongs to the class-II aminoacyl-tRNA synthetase family. Zn(2+) is required as a cofactor.

Its subcellular location is the cytoplasm. The enzyme catalyses tRNA(Ala) + L-alanine + ATP = L-alanyl-tRNA(Ala) + AMP + diphosphate. Catalyzes the attachment of alanine to tRNA(Ala) in a two-step reaction: alanine is first activated by ATP to form Ala-AMP and then transferred to the acceptor end of tRNA(Ala). Also edits incorrectly charged Ser-tRNA(Ala) and Gly-tRNA(Ala) via its editing domain. This chain is Alanine--tRNA ligase, found in Pseudomonas aeruginosa (strain ATCC 15692 / DSM 22644 / CIP 104116 / JCM 14847 / LMG 12228 / 1C / PRS 101 / PAO1).